Here is a 224-residue protein sequence, read N- to C-terminus: 7-cyano-7-deazaguanine synthase (224 aa).

Residue Leu-7–Leu-17 participates in ATP binding. Zn(2+) contacts are provided by Cys-191, Cys-199, Cys-202, and Cys-205.

Belongs to the QueC family. Zn(2+) serves as cofactor.

The catalysed reaction is 7-carboxy-7-deazaguanine + NH4(+) + ATP = 7-cyano-7-deazaguanine + ADP + phosphate + H2O + H(+). The protein operates within purine metabolism; 7-cyano-7-deazaguanine biosynthesis. Catalyzes the ATP-dependent conversion of 7-carboxy-7-deazaguanine (CDG) to 7-cyano-7-deazaguanine (preQ(0)). In Nostoc punctiforme (strain ATCC 29133 / PCC 73102), this protein is 7-cyano-7-deazaguanine synthase.